The primary structure comprises 341 residues: Ribosomal RNA small subunit methyltransferase H (341 aa).

S-adenosyl-L-methionine is bound by residues 47-49, aspartate 64, phenylalanine 97, aspartate 109, and glutamine 116; that span reads GGY.

It belongs to the methyltransferase superfamily. RsmH family.

The protein resides in the cytoplasm. The catalysed reaction is cytidine(1402) in 16S rRNA + S-adenosyl-L-methionine = N(4)-methylcytidine(1402) in 16S rRNA + S-adenosyl-L-homocysteine + H(+). In terms of biological role, specifically methylates the N4 position of cytidine in position 1402 (C1402) of 16S rRNA. This is Ribosomal RNA small subunit methyltransferase H from Allorhizobium ampelinum (strain ATCC BAA-846 / DSM 112012 / S4) (Agrobacterium vitis (strain S4)).